The following is a 166-amino-acid chain: Phosphopantetheine adenylyltransferase (166 aa).

Ser-11 is a substrate binding site. ATP is bound by residues 11–12 and His-19; that span reads SF. Residues Lys-43, Leu-75, and Arg-89 each contribute to the substrate site. ATP contacts are provided by residues 90 to 92, Glu-100, and 125 to 131; these read GLR and YGYLSSS.

It belongs to the bacterial CoaD family. Homohexamer. Mg(2+) serves as cofactor.

Its subcellular location is the cytoplasm. It catalyses the reaction (R)-4'-phosphopantetheine + ATP + H(+) = 3'-dephospho-CoA + diphosphate. Its pathway is cofactor biosynthesis; coenzyme A biosynthesis; CoA from (R)-pantothenate: step 4/5. In terms of biological role, reversibly transfers an adenylyl group from ATP to 4'-phosphopantetheine, yielding dephospho-CoA (dPCoA) and pyrophosphate. This is Phosphopantetheine adenylyltransferase from Syntrophotalea carbinolica (strain DSM 2380 / NBRC 103641 / GraBd1) (Pelobacter carbinolicus).